Here is a 192-residue protein sequence, read N- to C-terminus: Virion infectivity factor (192 aa).

Positions 14–17 are interaction with host APOBEC3F; F1-box; it reads DRMR. Residues 40–44 are interaction with host APOBEC3G; G-box; it reads YRHHF. Residues 54–72 form an interaction with host APOBEC3F and APOBEC3G; FG-box region; sequence EVHIPLETAELVITTYWGL. Residues 74-79 are interaction with host APOBEC3F; F2-box; that stretch reads PGEREW. Positions 75-114 are RNA-binding; sequence GEREWHLGQGVSIEWRQGRYRTQIDPGLADQLIHIYYFDC. T96 is subject to Phosphothreonine; by host MAP4K1. Zn(2+)-binding residues include H108, C114, C133, and H139. The HCCH motif motif lies at 108–139; the sequence is HIYYFDCFSESAIRKAILGHKISPRCNYQAGH. S144 carries the post-translational modification Phosphoserine; by host. A BC-box-like motif motif is present at residues 144–153; that stretch reads SLQYLALTAL. The tract at residues 151–164 is multimerization; the sequence is TALIAPKKTKPPLP. The interval 151–180 is SOCS box-like; that stretch reads TALIAPKKTKPPLPSVQKLVEDRWNKPQKT. Positions 164 to 192 are disordered; sequence PSVQKLVEDRWNKPQKTRGHRESHTMNGH. Position 165 is a phosphoserine; by host MAP4K1 (S165). Residues 171 to 172 are membrane association; the sequence is ED. A compositionally biased stretch (basic and acidic residues) spans 183 to 192; sequence HRESHTMNGH. T188 carries the post-translational modification Phosphothreonine; by host.

It belongs to the primate lentivirus group Vif protein family. As to quaternary structure, homomultimer; in vitro and presumably in vivo. Interacts with viral RNA and Pr55Gag precursor; these interactions mediate Vif incorporation into the virion. Interacts with the viral reverse transcriptase. Forms cullin-5-RING E3 ubiquitin-protein ligase complex (ECS complex) by interacting with host CUL5, RBX2, elongin BC complex (ELOB and ELOC) and CBFB/CBF-beta. Within the ECS complex, Vif interacts directly with host CUL5, ELOC and APOBEC (APOBEC3F and APOBEC3G) substrates. The ECS complex also contains some single-stranded RNA (ssRNA) that acts as a glue that bridges Vif with APOBEC (APOBEC3F and APOBEC3G) substrates. Interacts with host UBCE7IP1 isoform 3/ZIN and possibly with SAT. Interacts with host tyrosine kinases HCK and FYN; these interactions may decrease level of phosphorylated APOBEC3G incorporation into virions. Interacts with host ABCE1; this interaction may play a role in protecting viral RNA from damage during viral assembly. Interacts with host MDM2; this interaction targets Vif for degradation by the proteasome. Processed in virion by the viral protease. Post-translationally, highly phosphorylated on serine and threonine residues. In terms of processing, polyubiquitinated and degraded by the proteasome in the presence of APOBEC3G.

The protein resides in the host cytoplasm. It is found in the host cell membrane. Its subcellular location is the virion. Counteracts the innate antiviral activity of host APOBEC3F and APOBEC3G by promoting their ubiquitination and degradation. Acts as a substrate recognition component of an E3 ubiquitin-protein ligase complex: mechanistically, Vif hijacks a host cullin-5-RING E3 ubiquitin-protein ligase complex (ECS complex) and the transcription coactivator CBFB/CBF-beta to form an active E3 ubiquitin-protein ligase complex that targets APOBEC3G and APOBEC3F for polyubiquitination, leading to their degradation by the proteasome. Vif interaction with APOBEC3G also blocks its cytidine deaminase activity in a proteasome-independent manner, suggesting a dual inhibitory mechanism. May interact directly with APOBEC3G mRNA in order to inhibit its translation. Association with CBFB/CBF-beta also inhibits the transcription coactivator activity of CBFB/CBF-beta. Seems to play a role in viral morphology by affecting the stability of the viral nucleoprotein core. Finally, Vif also contributes to the G2 cell cycle arrest observed in HIV infected cells. The protein is Virion infectivity factor of Homo sapiens (Human).